The chain runs to 85 residues: Conotoxin Lt28.3 (85 aa).

A signal peptide spans 1-21; that stretch reads MPKLEMMLLVLLILPLCYIDA. The propeptide occupies 22-40; sequence VGPLPPWNMEDEIIEHWQK.

This sequence belongs to the conotoxin D superfamily. Contains 5 disulfide bonds. In terms of tissue distribution, expressed by the venom duct.

The protein localises to the secreted. Probable neurotoxin. This Conus litteratus (Lettered cone) protein is Conotoxin Lt28.3.